Here is a 220-residue protein sequence, read N- to C-terminus: MRLRNKPWAKEKIAAYPQYVIPNPEEHKGRWNELFGNDHPIHIEIGTGKGKFITEMAKANPNINYIGIELYPSVLVSALDKLIENELPNLRLLNVNAKDLTNFFAEGEIERIYLNFSDPWPKKRHEKRRLTYRAFLELYEKVLVDEGEIHFKTDNQAFFEYSLVSFSQYGLVLTYVSLDLHNSDFEGNVMTEYEEKFSAKGNRIYRCEVKYPPKHQKAGL.

Glu-44, Glu-69, Asn-96, and Asp-118 together coordinate S-adenosyl-L-methionine. Asp-118 is a catalytic residue. A substrate-binding site is contributed by Lys-122. The interval 124 to 129 is interaction with RNA; that stretch reads RHEKRR. Residues Asp-154 and 191–194 contribute to the substrate site; that span reads TEYE.

Belongs to the class I-like SAM-binding methyltransferase superfamily. TrmB family.

It carries out the reaction guanosine(46) in tRNA + S-adenosyl-L-methionine = N(7)-methylguanosine(46) in tRNA + S-adenosyl-L-homocysteine. Its pathway is tRNA modification; N(7)-methylguanine-tRNA biosynthesis. Its function is as follows. Catalyzes the formation of N(7)-methylguanine at position 46 (m7G46) in tRNA. The protein is tRNA (guanine-N(7)-)-methyltransferase of Geobacillus sp. (strain WCH70).